A 72-amino-acid polypeptide reads, in one-letter code: Translation initiation factor IF-1 (72 aa).

Positions 1–72 constitute an S1-like domain; it reads MAKEDCIEME…TKGRIKFRSK (72 aa).

This sequence belongs to the IF-1 family. In terms of assembly, component of the 30S ribosomal translation pre-initiation complex which assembles on the 30S ribosome in the order IF-2 and IF-3, IF-1 and N-formylmethionyl-tRNA(fMet); mRNA recruitment can occur at any time during PIC assembly.

The protein resides in the cytoplasm. One of the essential components for the initiation of protein synthesis. Stabilizes the binding of IF-2 and IF-3 on the 30S subunit to which N-formylmethionyl-tRNA(fMet) subsequently binds. Helps modulate mRNA selection, yielding the 30S pre-initiation complex (PIC). Upon addition of the 50S ribosomal subunit IF-1, IF-2 and IF-3 are released leaving the mature 70S translation initiation complex. In Francisella tularensis subsp. novicida (strain U112), this protein is Translation initiation factor IF-1.